The sequence spans 416 residues: UDP-N-acetylglucosamine 1-carboxyvinyltransferase (416 aa).

Phosphoenolpyruvate is bound at residue 22–23; it reads KN. Residue R91 coordinates UDP-N-acetyl-alpha-D-glucosamine. Residue C115 is the Proton donor of the active site. C115 carries the 2-(S-cysteinyl)pyruvic acid O-phosphothioketal modification. UDP-N-acetyl-alpha-D-glucosamine-binding positions include 120-124, D305, and I327; that span reads RPIDL.

Belongs to the EPSP synthase family. MurA subfamily.

The protein localises to the cytoplasm. The enzyme catalyses phosphoenolpyruvate + UDP-N-acetyl-alpha-D-glucosamine = UDP-N-acetyl-3-O-(1-carboxyvinyl)-alpha-D-glucosamine + phosphate. Its pathway is cell wall biogenesis; peptidoglycan biosynthesis. Its function is as follows. Cell wall formation. Adds enolpyruvyl to UDP-N-acetylglucosamine. The sequence is that of UDP-N-acetylglucosamine 1-carboxyvinyltransferase from Buchnera aphidicola subsp. Acyrthosiphon pisum (strain APS) (Acyrthosiphon pisum symbiotic bacterium).